The following is a 976-amino-acid chain: Vacuolar membrane protease (976 aa).

At 1–15 (MKLKSVFRSVLKYRK) the chain is on the cytoplasmic side. A helical membrane pass occupies residues 16-36 (TNLSLLLLITYSIITLLYIFD). Residues 37–359 (HERYKLNLPK…KFFVISAKTL (323 aa)) are Vacuolar-facing. N-linked (GlcNAc...) asparagine glycans are attached at residues asparagine 96 and asparagine 121. Zn(2+) is bound by residues histidine 156 and aspartate 168. Asparagine 189 carries N-linked (GlcNAc...) asparagine glycosylation. Glutamate 200 acts as the Proton acceptor in catalysis. Zn(2+) is bound at residue glutamate 201. N-linked (GlcNAc...) asparagine glycans are attached at residues asparagine 212 and asparagine 217. Zn(2+)-binding residues include glutamate 226 and histidine 300. Residues 360-380 (FYWNCIFLLVSPVVAIGLYLI) traverse the membrane as a helical segment. Topologically, residues 381–392 (SRDRMTWKSHSW) are cytoplasmic. Residues 393–412 (LSWTRFPLSLAAGIIVQKLF) form a helical membrane-spanning segment. Residues 413–428 (SNDIIRSNPLTFSRNY) are Vacuolar-facing. The chain crosses the membrane as a helical span at residues 429–449 (FWPISAFFTQVIFTSYVLINC). Residues 450–461 (SNFFFPCADMKS) are Cytoplasmic-facing. A helical transmembrane segment spans residues 462 to 482 (LSIIELFIILWTILLFTSKLL). Over 483–496 (YSSDYRYTGLYPLS) the chain is Vacuolar. A helical transmembrane segment spans residues 497–517 (IFFLLSTIAAILRLLALALGM). Residues 518-627 (RTRKRLGREC…NSLKLEYTDY (110 aa)) lie on the Cytoplasmic side of the membrane. A disordered region spans residues 528–610 (RDHHSNYSSH…PLLKGSNSME (83 aa)). Residues 549–558 (NLEQPQDQFT) are compositionally biased toward polar residues. The segment covering 559-570 (SSQDDQASIQDD) has biased composition (low complexity). Positions 582–601 (NVDEDHGMDSSSQQHDERVP) are enriched in basic and acidic residues. The helical transmembrane segment at 628-648 (AWIIQFLLIVPIPSFILFNSV) threads the bilayer. Topologically, residues 649–668 (DVIMDALNHTVQEGSKATFD) are vacuolar. Residue asparagine 656 is glycosylated (N-linked (GlcNAc...) asparagine). Residues 669–689 (VLRFGMVGSILMALPILPFFY) form a helical membrane-spanning segment. Over 690–692 (KVN) the chain is Cytoplasmic. The chain crosses the membrane as a helical span at residues 693–713 (YITISLTALLFLISASKTLLV). Over 714–976 (HPFTNSNPLK…LVIVKDAIIL (263 aa)) the chain is Vacuolar. Residues asparagine 768, asparagine 796, asparagine 811, asparagine 866, and asparagine 937 are each glycosylated (N-linked (GlcNAc...) asparagine).

Belongs to the peptidase M28 family. Requires Zn(2+) as cofactor.

It localises to the vacuole membrane. May be involved in vacuolar sorting and osmoregulation. This chain is Vacuolar membrane protease, found in Saccharomyces cerevisiae (strain Lalvin EC1118 / Prise de mousse) (Baker's yeast).